Reading from the N-terminus, the 938-residue chain is Isoleucine--tRNA ligase (938 aa).

Positions 58-68 (PYANGSIHIGH) match the 'HIGH' region motif. K183 bears the N6-acetyllysine mark. L-isoleucyl-5'-AMP is bound at residue E561. Residues 602–606 (KMSKS) carry the 'KMSKS' region motif. Position 605 (K605) interacts with ATP. Zn(2+) contacts are provided by C901, C904, C921, and C924.

It belongs to the class-I aminoacyl-tRNA synthetase family. IleS type 1 subfamily. Monomer. Zn(2+) is required as a cofactor.

The protein resides in the cytoplasm. It carries out the reaction tRNA(Ile) + L-isoleucine + ATP = L-isoleucyl-tRNA(Ile) + AMP + diphosphate. Its function is as follows. Catalyzes the attachment of isoleucine to tRNA(Ile). As IleRS can inadvertently accommodate and process structurally similar amino acids such as valine, to avoid such errors it has two additional distinct tRNA(Ile)-dependent editing activities. One activity is designated as 'pretransfer' editing and involves the hydrolysis of activated Val-AMP. The other activity is designated 'posttransfer' editing and involves deacylation of mischarged Val-tRNA(Ile). The chain is Isoleucine--tRNA ligase from Escherichia coli O9:H4 (strain HS).